Consider the following 75-residue polypeptide: Large ribosomal subunit protein bL31 (75 aa).

Zn(2+) is bound by residues Cys-16, Cys-18, Cys-38, and Cys-41.

This sequence belongs to the bacterial ribosomal protein bL31 family. Type A subfamily. In terms of assembly, part of the 50S ribosomal subunit. It depends on Zn(2+) as a cofactor.

In terms of biological role, binds the 23S rRNA. The polypeptide is Large ribosomal subunit protein bL31 (Nocardioides sp. (strain ATCC BAA-499 / JS614)).